A 155-amino-acid polypeptide reads, in one-letter code: Peptide methionine sulfoxide reductase MsrB (155 aa).

Residues 15–137 (REALIATLNA…NSVSLTFIPT (123 aa)) form the MsrB domain. Positions 54, 57, 103, and 106 each coordinate Zn(2+). The active-site Nucleophile is the cysteine 126.

This sequence belongs to the MsrB Met sulfoxide reductase family. Requires Zn(2+) as cofactor.

It carries out the reaction L-methionyl-[protein] + [thioredoxin]-disulfide + H2O = L-methionyl-(R)-S-oxide-[protein] + [thioredoxin]-dithiol. The chain is Peptide methionine sulfoxide reductase MsrB from Xylella fastidiosa (strain 9a5c).